The following is a 238-amino-acid chain: Ribonuclease PH (238 aa).

Phosphate is bound by residues Arg-86 and 124-126 (GTR).

Belongs to the RNase PH family. In terms of assembly, homohexameric ring arranged as a trimer of dimers.

The enzyme catalyses tRNA(n+1) + phosphate = tRNA(n) + a ribonucleoside 5'-diphosphate. Phosphorolytic 3'-5' exoribonuclease that plays an important role in tRNA 3'-end maturation. Removes nucleotide residues following the 3'-CCA terminus of tRNAs; can also add nucleotides to the ends of RNA molecules by using nucleoside diphosphates as substrates, but this may not be physiologically important. Probably plays a role in initiation of 16S rRNA degradation (leading to ribosome degradation) during starvation. The protein is Ribonuclease PH of Yersinia enterocolitica serotype O:8 / biotype 1B (strain NCTC 13174 / 8081).